We begin with the raw amino-acid sequence, 187 residues long: Sodium/potassium ATPase inhibitor SPAI-2 (187 aa).

The signal sequence occupies residues 1–21; sequence MRSRSFLVLVAVFLICETLVA. Q22 is modified (pyrrolidone carboxylic acid). A propeptide spanning residues 22–126 is cleaved from the precursor; it reads QRLDRIRGPK…NAQLPDKVQD (105 aa). The segment at 28 to 98 is disordered; sequence RGPKGQGQDP…QDPVKAELPD (71 aa). A run of 14 repeats spans residues 34–39, 40–45, 46–51, 58–63, 64–69, 70–75, 76–81, 82–87, 88–93, 100–105, 106–111, 112–117, 118–123, and 124–129. The segment at 34–129 is 14 X 6 AA approximate tandem repeats; the sequence is GQDPVEGQDQ…LPDKVQDPVK (96 aa). An SVP-1 clotting 1 repeat occupies 64 to 85; the sequence is GQDPVKGQDPVKGQDPVKGQDL. The WAP domain maps to 139–187; that stretch reads LLSKRGHCPRILFRCPLSNPSNKCWRDYDCPGVKKCCEGFCGKDCLYPK. Cystine bridges form between C146–C175, C153–C179, C162–C174, and C168–C183.

The short form (AA 127-187) may be an artifact due to the strongly acidic conditions of the duodenum. The pro-SPAI form may be the native form. Small intestine &gt; large intestine. The plasma contains the pro-SPAI form circulating.

Inhibits Na(+),K(+) ATPase by the competitive mode against Na(+). The protein is Sodium/potassium ATPase inhibitor SPAI-2 of Sus scrofa (Pig).